Here is a 335-residue protein sequence, read N- to C-terminus: Luciferase-like monooxygenase (335 aa).

The protein to bacterial alkanal monooxygenase alpha and beta chains.

This is Luciferase-like monooxygenase (yhbW) from Escherichia coli O6:H1 (strain CFT073 / ATCC 700928 / UPEC).